Reading from the N-terminus, the 472-residue chain is WAS protein family homolog DDB_G0292878 (472 aa).

Residues 279 to 472 form a disordered region; that stretch reads LPTYDNSNSG…ESDTDSSEWE (194 aa). The segment covering 282 to 299 has biased composition (polar residues); the sequence is YDNSNSGSAPVNQSSGGD. The span at 300 to 314 shows a compositional bias: low complexity; that stretch reads NNVNNNNNNNNSNNS. Residues 320–356 show a composition bias toward pro residues; it reads PPQPTNAPPPPPPPPQSANAPPPPPPPPVSAPPPFNP. The span at 363–373 shows a compositional bias: acidic residues; the sequence is NDDDDDDDDDN. The segment covering 374–383 has biased composition (gly residues); it reads GGGGGPGGAI. The WH2 domain maps to 382-401; the sequence is AIGDLLADIRRGHKNRLKKA. Residues 457 to 472 are compositionally biased toward acidic residues; that stretch reads TDDQDGESDTDSSEWE.

This sequence belongs to the WASH1 family.

In terms of biological role, acts as a nucleation-promoting factor by activating the Arp2/3 complex to induce actin polymerization. In Dictyostelium discoideum (Social amoeba), this protein is WAS protein family homolog DDB_G0292878.